The chain runs to 216 residues: Cell division protein SepF (216 aa).

The interval glutamate 22–alanine 126 is disordered. 3 stretches are compositionally biased toward basic and acidic residues: residues aspartate 28–valine 50, serine 62–valine 80, and alanine 106–valine 118.

Belongs to the SepF family. Homodimer. Interacts with FtsZ.

It localises to the cytoplasm. Its function is as follows. Cell division protein that is part of the divisome complex and is recruited early to the Z-ring. Probably stimulates Z-ring formation, perhaps through the cross-linking of FtsZ protofilaments. Its function overlaps with FtsA. In Rhodococcus erythropolis (strain PR4 / NBRC 100887), this protein is Cell division protein SepF.